The primary structure comprises 183 residues: Adenine phosphoribosyltransferase 3 (183 aa).

The protein belongs to the purine/pyrimidine phosphoribosyltransferase family. Homodimer.

It is found in the cytoplasm. It catalyses the reaction AMP + diphosphate = 5-phospho-alpha-D-ribose 1-diphosphate + adenine. The protein operates within purine metabolism; AMP biosynthesis via salvage pathway; AMP from adenine: step 1/1. Its function is as follows. Catalyzes a salvage reaction resulting in the formation of AMP, that is energically less costly than de novo synthesis. May contribute to the recycling of adenine into adenylate nucleotides and the inactivation of cytokinins by phosphoribosylation. Possesses low activity toward adenine and cytokinins. This chain is Adenine phosphoribosyltransferase 3 (APT3), found in Arabidopsis thaliana (Mouse-ear cress).